The following is a 430-amino-acid chain: MAFEFRLPDIGEGIHEGEIVKWFVKAGDTIEEDDVLAEVQNDKSVVEIPSPVSGTVEEVMVEEGTVAVVGDVIVKIDAPDAEDMQFKGHDDDSSSKEEPAKEEAPAEQAPVATQTEEVDENRTVKAMPSVRKYAREKGVNIKAVSGSGKNGRITKEDVDAYLNGGAPTASNESAASATSEEVAETPAAPAAVTLEGDFPETTEKIPAMRRAIAKAMVNSKHTAPHVTLMDEIDVQALWDHRKKFKEIAAEQGTKLTFLPYVVKALVSALKKYPALNTSFNEEAGEIVHKHYWNIGIAADTDRGLLVPVVKHADRKSIFQISDEINELAVKARDGKLTADEMKGATCTISNIGSAGGQWFTPVINHPEVAILGIGRIAQKPIVKDGEIVAAPVLALSLSFDHRQIDGATGQNAMNHIKRLLNNPELLLMEG.

The Lipoyl-binding domain occupies 2-77 (AFEFRLPDIG…VVGDVIVKID (76 aa)). An N6-lipoyllysine modification is found at lysine 43. Positions 80-122 (DAEDMQFKGHDDDSSSKEEPAKEEAPAEQAPVATQTEEVDENR) are disordered. Over residues 84–104 (MQFKGHDDDSSSKEEPAKEEA) the composition is skewed to basic and acidic residues. In terms of domain architecture, Peripheral subunit-binding (PSBD) spans 125-162 (KAMPSVRKYAREKGVNIKAVSGSGKNGRITKEDVDAYL). The interval 165–200 (GAPTASNESAASATSEEVAETPAAPAAVTLEGDFPE) is disordered. Low complexity predominate over residues 166–193 (APTASNESAASATSEEVAETPAAPAAVT). Histidine 401 is an active-site residue.

It belongs to the 2-oxoacid dehydrogenase family. In terms of assembly, forms a 24-polypeptide structural core with octahedral symmetry. (R)-lipoate is required as a cofactor.

The catalysed reaction is N(6)-[(R)-dihydrolipoyl]-L-lysyl-[protein] + acetyl-CoA = N(6)-[(R)-S(8)-acetyldihydrolipoyl]-L-lysyl-[protein] + CoA. Functionally, the pyruvate dehydrogenase complex catalyzes the overall conversion of pyruvate to acetyl-CoA and CO(2). It contains multiple copies of three enzymatic components: pyruvate dehydrogenase (E1), dihydrolipoamide acetyltransferase (E2) and lipoamide dehydrogenase (E3). This Staphylococcus aureus (strain COL) protein is Dihydrolipoyllysine-residue acetyltransferase component of pyruvate dehydrogenase complex (pdhC).